The following is a 146-amino-acid chain: Ribosome maturation factor RimP (146 aa).

Belongs to the RimP family.

The protein localises to the cytoplasm. Required for maturation of 30S ribosomal subunits. The sequence is that of Ribosome maturation factor RimP from Helicobacter pylori (strain ATCC 700392 / 26695) (Campylobacter pylori).